A 292-amino-acid polypeptide reads, in one-letter code: MSERVEAGQNVIKEYLVLTKPGIVSLVLITTLGGMYLGSRGELQPELVFWTLLGTGLAAAGSAVLNMVIDKDIDKLMVRTSERPLPKGTVDPTKAFIFGITLQVFSLVIMLTFVGVLPALLVALASFSYVILYSLLLKRKSPVATEIGGISGALPPVIGYVAASGSVDINAIALFLLMFMWQPPHFWVLALKYADDYKRAGIPTLPVARGVFITKLKTLLYTASLFPVSLIPYLTGLVENLYFVVAVVMNLIYLGLTLKFFFSKKEESMKLFFFSIIYLAVLFGTMIVDMVK.

A run of 8 helical transmembrane segments spans residues 15–35, 49–69, 104–124, 147–167, 171–191, 218–238, 242–262, and 271–291; these read YLVLTKPGIVSLVLITTLGGM, FWTLLGTGLAAAGSAVLNMVI, VFSLVIMLTFVGVLPALLVAL, IGGISGALPPVIGYVAASGSV, AIALFLLMFMWQPPHFWVLAL, TLLYTASLFPVSLIPYLTGLV, YFVVAVVMNLIYLGLTLKFFF, and LFFFSIIYLAVLFGTMIVDMV.

Belongs to the UbiA prenyltransferase family. Protoheme IX farnesyltransferase subfamily.

Its subcellular location is the cell inner membrane. The enzyme catalyses heme b + (2E,6E)-farnesyl diphosphate + H2O = Fe(II)-heme o + diphosphate. It functions in the pathway porphyrin-containing compound metabolism; heme O biosynthesis; heme O from protoheme: step 1/1. In terms of biological role, converts heme B (protoheme IX) to heme O by substitution of the vinyl group on carbon 2 of heme B porphyrin ring with a hydroxyethyl farnesyl side group. The polypeptide is Protoheme IX farnesyltransferase (Aquifex aeolicus (strain VF5)).